The primary structure comprises 482 residues: UDP-glycosyltransferase 1 (482 aa).

The N-linked (GlcNAc...) asparagine glycan is linked to asparagine 243. The chain crosses the membrane as a helical span at residues 450 to 470; the sequence is IYLVYALVLGSAWWIGKTILG.

This sequence belongs to the glycosyltransferase 28 family.

Its subcellular location is the membrane. The enzyme catalyses exophillate aglycone + UDP-alpha-D-glucose = exophillate + UDP + H(+). The protein operates within secondary metabolite biosynthesis. Functionally, acts as a depside 2-O-glucosyltransferase that catalyzes the first glycosylation step during phaeomoniecin D biosynthesis by producing the intermediate exophillic acid which is further O-galactosylated into phaeomoniecin D by the C-galactosyltransferase OGT2. The polypeptide is UDP-glycosyltransferase 1 (Phaeomoniella chlamydospora (Phaeoacremonium chlamydosporum)).